Here is a 259-residue protein sequence, read N- to C-terminus: MTDLTKSSLRALQLMDLTTLNDDDTNEKVIALCHQAKTPVGNTAAVCIYPRFIPIARKTLNEQGTPDIRIATVTNFPHGNDDIDIALAETRAAIAYGADEVDVVFPYRALMAGNEQVGFDLVKACKDACAAANVLLKVIIETGELKEEALIRKASEISIKAGADFIKTSTGKVPVNATPESARIMLEVIRDMGVAKTVGFKPAGGVRTAEDAAKYLAVADELLGADWADARHYRFGASSLLASLLQALGHGDGKSASSY.

The active-site Proton donor/acceptor is the Asp-102. Lys-167 acts as the Schiff-base intermediate with acetaldehyde in catalysis. Residue Lys-201 is the Proton donor/acceptor of the active site.

Belongs to the DeoC/FbaB aldolase family. DeoC type 2 subfamily.

It localises to the cytoplasm. It carries out the reaction 2-deoxy-D-ribose 5-phosphate = D-glyceraldehyde 3-phosphate + acetaldehyde. It functions in the pathway carbohydrate degradation; 2-deoxy-D-ribose 1-phosphate degradation; D-glyceraldehyde 3-phosphate and acetaldehyde from 2-deoxy-alpha-D-ribose 1-phosphate: step 2/2. In terms of biological role, catalyzes a reversible aldol reaction between acetaldehyde and D-glyceraldehyde 3-phosphate to generate 2-deoxy-D-ribose 5-phosphate. This chain is Deoxyribose-phosphate aldolase, found in Cronobacter sakazakii (strain ATCC BAA-894) (Enterobacter sakazakii).